Reading from the N-terminus, the 230-residue chain is MAKVKEKVAVVTGASSGIGEAIAKKLSQQGASIVLVGRNEQRLNEIAQQLNTPAKVVSADVTVKSNIDDMLKAVIDHFGHIDIVVNSAGQSLSSKITDYNVEQWDTMIDVNIKGTLHVLQATLPYLLKQSSGHIINLASVSGFEPTKTNAVYGATKAAIHAITQSLEKELARTGVKVTSISPGMVDTPMTEGTDFGERKKLEAQNIADAVVYALTQPSHVNVNEVTIRPV.

10 to 34 (VVTGASSGIGEAIAKKLSQQGASIV) serves as a coordination point for NADP(+). Residue Ser139 coordinates substrate. Tyr152 serves as the catalytic Proton acceptor.

The protein belongs to the short-chain dehydrogenases/reductases (SDR) family.

This is an uncharacterized protein from Staphylococcus epidermidis (strain ATCC 12228 / FDA PCI 1200).